The following is a 431-amino-acid chain: MRRLRRLVHLVLLCPFSKGLQGRLPGLRVKYVLLVWLGIFVGSWMVYVHYSSYSELCRGHVCQVVICDQYRKGIISGSVCQDLCELQKVEWRTCLSSAPGQQVYSGLWQDKEVTIKCGIEEALNSKAWPDAAPRRELVLFDKPTRGTSIKEFREMTLSFLKANLGDLPSLPALVDQILLMADFNKDSRVSLAEAKSVWALLQRNEFLLLLSLQEKEHASRLLGYCGDLYLTEGIPHGSWHGAVLLPALRPLLPSVLHRALQQWFGPAWPWRAKIAIGLLEFVEELFHGSYGTFYMCETTLANVGYTATYDFKMADLQQVAPEATVRRFLQGRHCEQSSDCIYGRDCRAPCDRLMRQCKGDLIQPNLAKVCELLRDYLLPGAPAGLYEELGKQLRTCTTLSGLASQIEAHHSLVLSHLKTLLWREISNTNYS.

Residues 1–30 (MRRLRRLVHLVLLCPFSKGLQGRLPGLRVK) lie on the Cytoplasmic side of the membrane. The May mediate ER retention motif lies at 5–6 (RR). Residues 31–51 (YVLLVWLGIFVGSWMVYVHYS) form a helical membrane-spanning segment. At 52 to 431 (SYSELCRGHV…WREISNTNYS (380 aa)) the chain is on the lumenal side. 2 disulfides stabilise this stretch: Cys57–Cys94 and Cys62–Cys117.

The protein belongs to the DIPK family. In terms of processing, among the many cysteines in the lumenal domain, most are probably involved in disulfide bonds. Expressed in kidney, testis, lung, heart, stomach, intestine, pancreas, liver and salivary gland. Strongly expressed in acute pancreatitis, brain, and in peripheral endothelial cells.

The protein localises to the endoplasmic reticulum membrane. In Mus musculus (Mouse), this protein is Divergent protein kinase domain 1B (Dipk1b).